Here is a 136-residue protein sequence, read N- to C-terminus: Large ribosomal subunit protein uL16 (136 aa).

Belongs to the universal ribosomal protein uL16 family. Part of the 50S ribosomal subunit.

In terms of biological role, binds 23S rRNA and is also seen to make contacts with the A and possibly P site tRNAs. The polypeptide is Large ribosomal subunit protein uL16 (Bradyrhizobium diazoefficiens (strain JCM 10833 / BCRC 13528 / IAM 13628 / NBRC 14792 / USDA 110)).